The following is a 226-amino-acid chain: Leucyl/phenylalanyl-tRNA--protein transferase (226 aa).

It belongs to the L/F-transferase family.

It is found in the cytoplasm. It catalyses the reaction N-terminal L-lysyl-[protein] + L-leucyl-tRNA(Leu) = N-terminal L-leucyl-L-lysyl-[protein] + tRNA(Leu) + H(+). The catalysed reaction is N-terminal L-arginyl-[protein] + L-leucyl-tRNA(Leu) = N-terminal L-leucyl-L-arginyl-[protein] + tRNA(Leu) + H(+). The enzyme catalyses L-phenylalanyl-tRNA(Phe) + an N-terminal L-alpha-aminoacyl-[protein] = an N-terminal L-phenylalanyl-L-alpha-aminoacyl-[protein] + tRNA(Phe). Functions in the N-end rule pathway of protein degradation where it conjugates Leu, Phe and, less efficiently, Met from aminoacyl-tRNAs to the N-termini of proteins containing an N-terminal arginine or lysine. The polypeptide is Leucyl/phenylalanyl-tRNA--protein transferase (Ectopseudomonas mendocina (strain ymp) (Pseudomonas mendocina)).